The following is an 89-amino-acid chain: Sec translocon accessory complex subunit YrbF (89 aa).

Residues 4–24 (GTLGTLVPIILMFAVLYFLLI) traverse the membrane as a helical segment.

Belongs to the YajC family. In terms of assembly, part of the SecDF-YidC-YajC translocase complex. The SecDF-YidC-YajC translocase forms a supercomplex with SecYEG, called the holo-translocon (HTL).

The protein localises to the cell membrane. In terms of biological role, the SecYEG-SecDF-YajC-YidC holo-translocon (HTL) protein secretase/insertase is a supercomplex required for protein secretion, insertion of proteins into membranes, and assembly of membrane protein complexes. While the SecYEG complex is essential for assembly of a number of proteins and complexes, the SecDF-YajC-YidC subcomplex facilitates these functions. This is Sec translocon accessory complex subunit YrbF (yrbF) from Bacillus subtilis (strain 168).